Consider the following 679-residue polypeptide: Translation initiation factor IF-2 (679 aa).

A tr-type G domain is found at 178–347; it reads KRPPIITVMG…LLTSEMQELK (170 aa). The tract at residues 187–194 is G1; the sequence is GHVDHGKT. 187–194 serves as a coordination point for GTP; the sequence is GHVDHGKT. The segment at 212 to 216 is G2; that stretch reads GITQH. Residues 233 to 236 form a G3 region; that stretch reads DTPG. Residues 233 to 237 and 287 to 290 contribute to the GTP site; these read DTPGH and NKMD. Residues 287-290 form a G4 region; the sequence is NKMD. Positions 323–325 are G5; that stretch reads SAK.

It belongs to the TRAFAC class translation factor GTPase superfamily. Classic translation factor GTPase family. IF-2 subfamily.

Its subcellular location is the cytoplasm. One of the essential components for the initiation of protein synthesis. Protects formylmethionyl-tRNA from spontaneous hydrolysis and promotes its binding to the 30S ribosomal subunits. Also involved in the hydrolysis of GTP during the formation of the 70S ribosomal complex. The polypeptide is Translation initiation factor IF-2 (Clostridium perfringens (strain ATCC 13124 / DSM 756 / JCM 1290 / NCIMB 6125 / NCTC 8237 / Type A)).